Here is a 77-residue protein sequence, read N- to C-terminus: RNA-binding protein Hfq (77 aa).

Positions 9 to 68 constitute a Sm domain; that stretch reads DPFLNALRKEHIPVAIYLVNGIKLQGQIESFDQFVILLKNTVSQMVYKHAISTVVPARAI.

Belongs to the Hfq family. In terms of assembly, homohexamer.

Its function is as follows. RNA chaperone that binds small regulatory RNA (sRNAs) and mRNAs to facilitate mRNA translational regulation in response to envelope stress, environmental stress and changes in metabolite concentrations. Also binds with high specificity to tRNAs. The sequence is that of RNA-binding protein Hfq from Psychromonas ingrahamii (strain DSM 17664 / CCUG 51855 / 37).